The following is a 109-amino-acid chain: Nucleoid-associated protein VV1_2004 (109 aa).

Belongs to the YbaB/EbfC family. Homodimer.

Its subcellular location is the cytoplasm. It localises to the nucleoid. Binds to DNA and alters its conformation. May be involved in regulation of gene expression, nucleoid organization and DNA protection. The protein is Nucleoid-associated protein VV1_2004 of Vibrio vulnificus (strain CMCP6).